The following is a 152-amino-acid chain: Cuticle protein 64 (152 aa).

Tandem repeats lie at residues 27-30 (AAPA), 33-37 (AAPAV), 39-42 (AAPA), 86-89 (AAPV), 92-95 (AAPA), 98-101 (AAPA), and 127-130 (AAPA).

In terms of biological role, component of the cuticle of migratory locust which contains more than 100 different structural proteins. This chain is Cuticle protein 64, found in Locusta migratoria (Migratory locust).